A 144-amino-acid polypeptide reads, in one-letter code: Large ribosomal subunit protein uL22 (144 aa).

The tract at residues 1–38 is disordered; the sequence is MAETQTTKKGAKRVRQPVPARRSKPNRPAKAAPGPHAS. Residues 9–27 are compositionally biased toward basic residues; sequence KGAKRVRQPVPARRSKPNR.

It belongs to the universal ribosomal protein uL22 family. Part of the 50S ribosomal subunit.

Its function is as follows. This protein binds specifically to 23S rRNA; its binding is stimulated by other ribosomal proteins, e.g. L4, L17, and L20. It is important during the early stages of 50S assembly. It makes multiple contacts with different domains of the 23S rRNA in the assembled 50S subunit and ribosome. Functionally, the globular domain of the protein is located near the polypeptide exit tunnel on the outside of the subunit, while an extended beta-hairpin is found that lines the wall of the exit tunnel in the center of the 70S ribosome. In Anaeromyxobacter sp. (strain Fw109-5), this protein is Large ribosomal subunit protein uL22.